Reading from the N-terminus, the 92-residue chain is Small ribosomal subunit protein bS20 (92 aa).

Positions 1 to 23 (MANSPSAKKRAKQAEKRRSHNAS) are disordered. The segment covering 7–20 (AKKRAKQAEKRRSH) has biased composition (basic residues).

This sequence belongs to the bacterial ribosomal protein bS20 family.

Its function is as follows. Binds directly to 16S ribosomal RNA. The polypeptide is Small ribosomal subunit protein bS20 (Pseudomonas fluorescens (strain ATCC BAA-477 / NRRL B-23932 / Pf-5)).